A 269-amino-acid polypeptide reads, in one-letter code: MSSQQSSSIALRFEQLKREGRMALMPFLMAGDPDLSVTAEVLLSLQAAGADMVELGMPYSDPLADGPVIQAAAARALAAGTTPKKVLEMLSSLRGQLSIPVILFTYSNPLLNVGMERFCEQAAEAGASGLVVPDLPLEEAERLSPIAEREGLDLVLLVAPTTPTERMGRIAQSSRGFTYLVSVTGVTGERSTMETRVEGLVQALKQSSPVPVAVGFGISGVDQVRQVRSWGADGAIVGSALVKRMASASLGSVAAEAGLFCSELRKAAD.

Catalysis depends on proton acceptor residues Glu54 and Asp65.

The protein belongs to the TrpA family. In terms of assembly, tetramer of two alpha and two beta chains.

It carries out the reaction (1S,2R)-1-C-(indol-3-yl)glycerol 3-phosphate + L-serine = D-glyceraldehyde 3-phosphate + L-tryptophan + H2O. It participates in amino-acid biosynthesis; L-tryptophan biosynthesis; L-tryptophan from chorismate: step 5/5. Functionally, the alpha subunit is responsible for the aldol cleavage of indoleglycerol phosphate to indole and glyceraldehyde 3-phosphate. This chain is Tryptophan synthase alpha chain, found in Synechococcus sp. (strain CC9902).